The chain runs to 481 residues: ATP synthase subunit beta (481 aa).

Position 167 to 174 (167 to 174 (GGAGVGKT)) interacts with ATP.

Belongs to the ATPase alpha/beta chains family. As to quaternary structure, F-type ATPases have 2 components, CF(1) - the catalytic core - and CF(0) - the membrane proton channel. CF(1) has five subunits: alpha(3), beta(3), gamma(1), delta(1), epsilon(1). CF(0) has three main subunits: a(1), b(2) and c(9-12). The alpha and beta chains form an alternating ring which encloses part of the gamma chain. CF(1) is attached to CF(0) by a central stalk formed by the gamma and epsilon chains, while a peripheral stalk is formed by the delta and b chains.

It localises to the cell membrane. It carries out the reaction ATP + H2O + 4 H(+)(in) = ADP + phosphate + 5 H(+)(out). In terms of biological role, produces ATP from ADP in the presence of a proton gradient across the membrane. The catalytic sites are hosted primarily by the beta subunits. The chain is ATP synthase subunit beta from Corynebacterium efficiens (strain DSM 44549 / YS-314 / AJ 12310 / JCM 11189 / NBRC 100395).